Here is a 222-residue protein sequence, read N- to C-terminus: Ribosomal RNA small subunit methyltransferase I (222 aa).

The protein belongs to the methyltransferase superfamily. RsmI family.

Its subcellular location is the cytoplasm. It carries out the reaction cytidine(1402) in 16S rRNA + S-adenosyl-L-methionine = 2'-O-methylcytidine(1402) in 16S rRNA + S-adenosyl-L-homocysteine + H(+). Functionally, catalyzes the 2'-O-methylation of the ribose of cytidine 1402 (C1402) in 16S rRNA. The chain is Ribosomal RNA small subunit methyltransferase I from Thermotoga maritima (strain ATCC 43589 / DSM 3109 / JCM 10099 / NBRC 100826 / MSB8).